A 550-amino-acid chain; its full sequence is Ribosomal protein S6 kinase beta (550 aa).

One can recognise a Protein kinase domain in the interval 83–344; it reads FQLLKVLGKG…AEEIKSHAFF (262 aa). ATP-binding positions include 89 to 97 and Lys115; that span reads LGKGGYGKV. Asp210 (proton acceptor) is an active-site residue. One can recognise an AGC-kinase C-terminal domain in the interval 345–415; the sequence is KTTDWNLVYA…VAPSVLEMMN (71 aa). Thr404 carries the phosphothreonine modification. Disordered regions lie at residues 433-466 and 484-550; these read RAGAAKSPRKPGDPETASILHGGHSNLFGHGPNS and TAGG…KRVM. Phosphoserine is present on Ser439. Low complexity predominate over residues 520 to 534; that stretch reads TTTGNGSTTTTRPSN.

It belongs to the protein kinase superfamily. AGC Ser/Thr protein kinase family. S6 kinase subfamily. Mg(2+) serves as cofactor. In terms of processing, may be phosphorylated on Thr-404 by let-363/TOR.

Its subcellular location is the cell projection. The protein localises to the axon. The protein resides in the perikaryon. It carries out the reaction L-seryl-[protein] + ATP = O-phospho-L-seryl-[protein] + ADP + H(+). The catalysed reaction is L-threonyl-[protein] + ATP = O-phospho-L-threonyl-[protein] + ADP + H(+). Its function is as follows. Serine/threonine-protein kinase which regulates mRNA translation. Negatively regulates lifespan and resistance to starvation, oxidative stress, protein aggregation and P.aeruginosa-mediated infection. May regulate these processes by preventing the activation of transcription factor hif-1. Required, probably downstream of let-363/TOR, for the establishment of the proper number of germline progenitors by promoting cell cycle progression and preventing differentiation during larval development. Regulates germ cell size. In addition required for sperm production and embryo viability. Involved in axon regeneration of PLM and ALM neurons by inhibiting growth cone formation early after axotomy and later by inhibiting axon extension. Functions in axon regeneration and lifespan probably by preventing aak-2/AMPK activation. Negatively regulates autophagy. The chain is Ribosomal protein S6 kinase beta from Caenorhabditis elegans.